The following is a 74-amino-acid chain: Cytochrome c oxidase subunit 2 (74 aa).

Residues 1–14 are Mitochondrial intermembrane-facing; sequence MAHPSQLGLQDAAS. Residues 15-45 form a helical membrane-spanning segment; that stretch reads PVMEELLHFHDHALMIVFLISTLVLYIIVAM. The Mitochondrial matrix portion of the chain corresponds to 46 to 74; it reads VSTKLTDKYTIDSQEIEIVWTVLPAVILI.

It belongs to the cytochrome c oxidase subunit 2 family. In terms of assembly, component of the cytochrome c oxidase (complex IV, CIV), a multisubunit enzyme composed of 14 subunits. The complex is composed of a catalytic core of 3 subunits MT-CO1, MT-CO2 and MT-CO3, encoded in the mitochondrial DNA, and 11 supernumerary subunits COX4I, COX5A, COX5B, COX6A, COX6B, COX6C, COX7A, COX7B, COX7C, COX8 and NDUFA4, which are encoded in the nuclear genome. The complex exists as a monomer or a dimer and forms supercomplexes (SCs) in the inner mitochondrial membrane with NADH-ubiquinone oxidoreductase (complex I, CI) and ubiquinol-cytochrome c oxidoreductase (cytochrome b-c1 complex, complex III, CIII), resulting in different assemblies (supercomplex SCI(1)III(2)IV(1) and megacomplex MCI(2)III(2)IV(2)). Found in a complex with TMEM177, COA6, COX18, COX20, SCO1 and SCO2. Interacts with TMEM177 in a COX20-dependent manner. Interacts with COX20. Interacts with COX16. Cu cation serves as cofactor.

Its subcellular location is the mitochondrion inner membrane. It catalyses the reaction 4 Fe(II)-[cytochrome c] + O2 + 8 H(+)(in) = 4 Fe(III)-[cytochrome c] + 2 H2O + 4 H(+)(out). Functionally, component of the cytochrome c oxidase, the last enzyme in the mitochondrial electron transport chain which drives oxidative phosphorylation. The respiratory chain contains 3 multisubunit complexes succinate dehydrogenase (complex II, CII), ubiquinol-cytochrome c oxidoreductase (cytochrome b-c1 complex, complex III, CIII) and cytochrome c oxidase (complex IV, CIV), that cooperate to transfer electrons derived from NADH and succinate to molecular oxygen, creating an electrochemical gradient over the inner membrane that drives transmembrane transport and the ATP synthase. Cytochrome c oxidase is the component of the respiratory chain that catalyzes the reduction of oxygen to water. Electrons originating from reduced cytochrome c in the intermembrane space (IMS) are transferred via the dinuclear copper A center (CU(A)) of subunit 2 and heme A of subunit 1 to the active site in subunit 1, a binuclear center (BNC) formed by heme A3 and copper B (CU(B)). The BNC reduces molecular oxygen to 2 water molecules using 4 electrons from cytochrome c in the IMS and 4 protons from the mitochondrial matrix. This Megalops atlanticus (Tarpon) protein is Cytochrome c oxidase subunit 2 (mt-co2).